We begin with the raw amino-acid sequence, 228 residues long: UPF0173 metal-dependent hydrolase Lm4b_01588 (228 aa).

The protein belongs to the UPF0173 family.

The sequence is that of UPF0173 metal-dependent hydrolase Lm4b_01588 from Listeria monocytogenes serotype 4b (strain CLIP80459).